The sequence spans 3380 residues: MGTPPHIWFLLILAISSGGLSAAVGGCNHQCTPQSSVFQYQKGQTYTYSFEGTTLTSLPGTQGEPVRLKLKATADLSVADDCNKVLRLRGVTVSGPDSKNYANLKDLEAHPVLANFKGSSINKQLCSEDGDNQSSLNIKRAILSLLQTPNTKSSTASEVDVFGICPTNVRHSQRGDVTVISKTRNLNRYASRENLIQETLSTRFTGQSDLHATPFLDADLHVEQQIKGGLIVSATSRESYLFRPFSNQGNGAKTIVETKLTLTSQNAQPAPPLASFTVPKSIVFEAPHALASVPGGSSAITAALHAAESSTKDGVTVDAAEKFRTLVSVLRQSSTTDILKVYNDVKAGAGFSNKHSARNLLLDALFRTSTGDAVEVIARLLKTKEITANHWYLSLAFIQHASLKSVVSISSLLDQKNLPTEAFLGIGSFIGRYCREHNCENVAEFDEVLNKFSKHLSGSTTSKAGENRAIAALKALGNIRHLNNALGEKVKQLALDKSLPPRVRVAALEVIQSDPCRKNIKQAALQILRDQVEDSELRIKAYLAVVECPCDNVVKTISNLLENEPIIQVGSFVVSHLKNLQASTDPSKAEAKEKLGQLKPKKIFSSDIRKYSQNYELSYAIDAINAGASVESNVIFSQSSYLPRSVSLNLTADVFGHSYNVFEIAARTENLDHIIESFLGPKGYIETEDDDKFVDEVEEKTKSLYNRITERFEKTFRQKRSVSKDAVDNIRQQAYKSLLPSQRDRSLDVDLSLKTFGSELAWFNYDGKHEQKSSERVVDEIFDAIDEGLKKSKKFNYDFEPHFTFLDSELSYPTNLGFPLKLAIDGSIAARLKLNGEVDVRSILRQPENAAFRLEFVPSAAVELTGKLLVDAYVVEGGLKLDYNVHSSTGINVAVHNLNDLGIDIKVGLPVKKQDIIDVKTDVLTTVKERGHPETSTPLHFNLKGNDYKQYRGCFDQLSPVSGLTFCGNVSVPWVSPTQAAAFYPLNGPSHLSVSIEADDVSEYHFRAEIKKDESAFKSAAVLFDTPGSSADRKVLLLVEKKEKPHQGITAHLKSGWKEIVAEGLLIDDNNEKSVSAKLVIESDEYSIKGGVKISGNPSRQVYKPILEYKAPAKDSGAKVKKSHKTSEGITVDGAVVVERTSDKGKYTFQDLSLKTPKGTFVINGQLDIVPRNYAFDLKLSVDKNELLLNGHLNYAEPKSIDVALEVTSPQFPDYGSGFQLINKRGDDYSDTKIILACGRDLKSDGSRLILEHFIKGKYETPDTFNLETKGEVLGTGHKIFGKFDIDSKPKHLEYDLKLGFDENEVTSDLVAKRDIKSPDDYELKFSAKILDNSIRIESSREVKPKDDSAFLNTLVVLSGKKYEFQVDVKLAAEDEYHTSLKAESNLKIEGKTSVRLITDFTTDAQTVNGHVKVSNEGEDFFELIYKLNRGSGNPSGNAKLFVKNYLDGAATFKYNNGVGSGTLQIDVLKLHRKIKATGDLTLSGSQRSAAIDLYWDADRDQSKQLLFKTENDVKEKSIDSKNTLKILDKLTTLNFKGSLSGAIDDGEVEGQGELILPVGTYLGVKFGRALHLTQADTKVGLHLQAEGRESASSTQPVWKSDFLLESALTRDSFVGEAKLLFETKGKDDLKLFLSGKSLPQGEKKLISGQFSGQGSLIGGRTSVIKLNSEIDETFIAYNLNSECNQGYRANIVGKINRGYSPVAVKQIENTLELLLPFDKLKQLKHTIIGTFSSQPESTPEFTVSNVIIWNNENTLKLTGEAAGDEKEGRTKWDLILPKEEPRTLETTWSNAGDNKKAGSLSFKWGGNKEAKVSTDIEFTSDNQPQILHLKATSPTEKFGIFDLALSLKKNADPADKIDFELTVTADQKKTDVKGSLGLAPGVPIIDVVAVQPSGTSKVFVDFLRKSDSELHGAIELQWVAFGGGHLTANGDIKLDIDDFYLKLDVDSPKFNFNKWHLEAGQRAAKGSKRIVFTAKSAEKVLFSGSTNFHSKAENNKISYSGNGQVRIGDKAHAFNFRSSRQNLIQDANKEIGVEYNLDFKIAGHGSLHNILKVTNKELHALGKQCSEGKPNCAVVEIKSKVSAADAKETTHDLVFLVDLKSVGVDTGVAFTAETVRRGFWLIDEQASLTLSHNGETTYKYKGYLKESGSGFTLTLPSRVIAAEVKLSSDVKPNHSKQQISASVWLDKTRLPNSFSSVSILLEEIEDKNTDKYVSQLRFTHPNLEKDLTVKGYVQIGLENKLFDSNLEIDIFKQKNQKISISSTVVEQKQNDVVKYLSTLDVKSKGHELDVTGRGEATVKPSLIALQSVLKYKKDKRIKEFKNFQFEVSTEKLLVHVKVPNHHLLHIDANTKINDKHASGDASVHIIGLPTSVIHIEGENKGFPVVKGTISSEGTPNKLELIADLSDGLLVEADFISESGKKELFYTFLSGKKDSRKPEFRWSVENIQSALEPHKNDIQEVLNKLKEISDEAGNEITKESSRLADSLKAGLPNFRRFVNTYETQLKALKEEIANDKVLKEISENWKEVIGDAAEVVSTLVNGILVTIDALLKTLNELAESVLDALKKSLPALKDSYKQAVDAIVGIAKSLTQSLVNILSSAAEILKKHEADIKEYLSVLADLANDVGKFVTKITGVIYEGVVEFSKPIKEKLDGLKFGVAIEFGKVVEQLQNLIVPQELLAFAQEIVSELKETTLTPEIQDLLQAIEKYLEKVSKKKDADVEKELKLIFEKAIDAVESVINFVVSEITGGDHTKDLYDINIPTVLPSFIQLPRVFSVRFSPLIYLVSNGVPCLSDLLASYRPSLRFDNIIPPYDATAILLNSHHFFTFDRRHLTFKGICSYILAQDVQDGNFTIIANIEGGSLKSIIVSDQATTFELASDKSLLVNGRPTEYPADEGEFHAWREYNRVGIQTKAGVKVTCETSIELCTFEINGFYFGKTRGLLGTINNEPWDDFTKPDGQVASKANEFGNAWKVDAQCANVDGVDHHEHSIKVEECEEVFSKASLLSPCSLFLDPAPYLEACSHIAHEATTKEEKQLAACRTAAAYVQACSVENVFVSVPPHCVHCSVNGDAAIDIGQSFSVKVPQKSADILIVLEQVTGNAETVKDFVSPIVSQLTQELSSRGISDVWISLLGYGAPGQEYPHLYTSSGGKLSYDGKQKNIQFGERKVLGPFPFDNFTESIDWLDEFTDQAFHLITTADTILDYPFRPGAAKSIIYVLDTSCETTLFLKHLPVKALKLKDAIGSPGIVLHLVTNVDSVQSKNIVGFDTNHAYYNQEGKKRVVSEVTGNEKAALKISETACGQIALATSGTVFNKNNLKQTKKFVAQHIADSLTNVELTQDCKCLPVEGIHTRAVCAVTGAREKEHLSVKGVKGTKGVKG.

The first 21 residues, 1 to 21 (MGTPPHIWFLLILAISSGGLS), serve as a signal peptide directing secretion. One can recognise a Vitellogenin domain in the interval 40 to 646 (YQKGQTYTYS…SQSSYLPRSV (607 aa)). Asn132, Asn649, Asn969, Asn2174, Asn2851, and Asn3177 each carry an N-linked (GlcNAc...) asparagine glycan. The VWFD domain maps to 2815–2979 (ATAILLNSHH…NAWKVDAQCA (165 aa)). Cysteines 2839 and 2978 form a disulfide.

Post-translationally, cleaved into 2 chains by furin protease. However, prevention of cleavage does not impair its function. In terms of processing, N-glycosylated. Present in brain, hemolymph, fat body and eyes.

The protein localises to the secreted. Constitutes the major component of lipophorin, which mediates transport for various types of lipids in hemolymph. Acts by forming lipoprotein particles that bind lipoproteins and lipids. May be required for morphogens wingless (wg) and hedgehog (hh) function, possibly by acting as vehicles for the movement of wg and hh. The sequence is that of Apolipophorins from Locusta migratoria (Migratory locust).